The following is a 139-amino-acid chain: Actin-depolymerizing factor 7 (139 aa).

Positions 7-139 (GMAVDDECKL…GLDVIRGRAN (133 aa)) constitute an ADF-H domain.

It belongs to the actin-binding proteins ADF family.

Its function is as follows. Actin-depolymerizing protein. Severs actin filaments (F-actin) and binds to actin monomers. This Oryza sativa subsp. japonica (Rice) protein is Actin-depolymerizing factor 7 (ADF7).